Here is a 500-residue protein sequence, read N- to C-terminus: 4-aminobutyrate aminotransferase, mitochondrial (500 aa).

Residues 1-27 constitute a mitochondrion transit peptide; it reads MAFLLTTRRLVCSSQKNLHLFTPGSRY. Position 163 (Cys-163) interacts with [2Fe-2S] cluster. 164 to 165 provides a ligand contact to pyridoxal 5'-phosphate; sequence GS. A [2Fe-2S] cluster-binding site is contributed by Cys-166. Arg-220 is a binding site for substrate. An N6-succinyllysine modification is found at Lys-231. At Lys-252 the chain carries N6-acetyllysine; alternate. Lys-252 bears the N6-succinyllysine; alternate mark. Residues Lys-279 and Lys-318 each carry the N6-acetyllysine modification. Lys-357 carries the post-translational modification N6-(pyridoxal phosphate)lysine. Pyridoxal 5'-phosphate is bound at residue Thr-381. Residue Lys-413 is modified to N6-acetyllysine; alternate. Lys-413 bears the N6-succinyllysine; alternate mark. Lys-452 and Lys-470 each carry N6-acetyllysine.

The protein belongs to the class-III pyridoxal-phosphate-dependent aminotransferase family. In terms of assembly, homodimer; disulfide-linked. Pyridoxal 5'-phosphate serves as cofactor. The cofactor is [2Fe-2S] cluster.

Its subcellular location is the mitochondrion matrix. It carries out the reaction 4-aminobutanoate + 2-oxoglutarate = succinate semialdehyde + L-glutamate. The catalysed reaction is (S)-3-amino-2-methylpropanoate + 2-oxoglutarate = 2-methyl-3-oxopropanoate + L-glutamate. Catalyzes the conversion of gamma-aminobutyrate and L-beta-aminoisobutyrate to succinate semialdehyde and methylmalonate semialdehyde, respectively. Can also convert delta-aminovalerate and beta-alanine. The chain is 4-aminobutyrate aminotransferase, mitochondrial from Rattus norvegicus (Rat).